We begin with the raw amino-acid sequence, 326 residues long: Small ribosomal subunit protein RACK1x (326 aa).

7 WD repeats span residues Ala-13–Gly-53, Gly-61–Arg-100, Gly-103–Ile-142, Gly-147–Ser-188, Gly-191–Ser-230, Glu-232–Asp-270, and Asn-290–Tyr-326.

It belongs to the WD repeat G protein beta family. Ribosomal protein RACK1 subfamily. As to quaternary structure, homodimer and heterodimer with RACK1A or RACK1B. Interacts with GB1, MEKK1, MKK4, MKK5, MPK3 and MPK6, but not with GPA1 or MPK4. Widely expressed.

In terms of biological role, minor component of the RACK1 regulatory proteins that play a role in multiple signal transduction pathways. Involved in multiple hormone responses and developmental processes. MAPK cascade scaffolding protein involved in the protease IV and ArgC signaling pathway but not the flg22 pathway. This is Small ribosomal subunit protein RACK1x from Arabidopsis thaliana (Mouse-ear cress).